Consider the following 130-residue polypeptide: Ribosome-binding factor A (130 aa).

The protein belongs to the RbfA family. In terms of assembly, monomer. Binds 30S ribosomal subunits, but not 50S ribosomal subunits or 70S ribosomes.

It localises to the cytoplasm. In terms of biological role, one of several proteins that assist in the late maturation steps of the functional core of the 30S ribosomal subunit. Associates with free 30S ribosomal subunits (but not with 30S subunits that are part of 70S ribosomes or polysomes). Required for efficient processing of 16S rRNA. May interact with the 5'-terminal helix region of 16S rRNA. This Roseiflexus sp. (strain RS-1) protein is Ribosome-binding factor A.